We begin with the raw amino-acid sequence, 345 residues long: Eukaryotic translation initiation factor 3 subunit F (345 aa).

Positions 30 to 166 (VVIQPQAIFS…TRAYISAPVG (137 aa)) constitute an MPN domain. The disordered stretch occupies residues 310–345 (EGASAEAGAQRGQRGGRGGRGGQQRTQERASEEVRA). Residues 312–321 (ASAEAGAQRG) are compositionally biased toward low complexity. Positions 322–331 (QRGGRGGRGG) are enriched in gly residues. Over residues 335 to 345 (TQERASEEVRA) the composition is skewed to basic and acidic residues.

This sequence belongs to the eIF-3 subunit F family. Component of the eukaryotic translation initiation factor 3 (eIF-3) complex.

The protein resides in the cytoplasm. Its function is as follows. Component of the eukaryotic translation initiation factor 3 (eIF-3) complex, which is involved in protein synthesis of a specialized repertoire of mRNAs and, together with other initiation factors, stimulates binding of mRNA and methionyl-tRNAi to the 40S ribosome. The eIF-3 complex specifically targets and initiates translation of a subset of mRNAs involved in cell proliferation. This is Eukaryotic translation initiation factor 3 subunit F from Neosartorya fischeri (strain ATCC 1020 / DSM 3700 / CBS 544.65 / FGSC A1164 / JCM 1740 / NRRL 181 / WB 181) (Aspergillus fischerianus).